The sequence spans 231 residues: 5'-methylthioadenosine/S-adenosylhomocysteine nucleosidase (231 aa).

Catalysis depends on glutamate 12, which acts as the Proton acceptor. Substrate-binding positions include glycine 78, valine 153, and 174–175 (ME). Aspartate 198 (proton donor) is an active-site residue.

The protein belongs to the PNP/UDP phosphorylase family. MtnN subfamily.

It carries out the reaction S-adenosyl-L-homocysteine + H2O = S-(5-deoxy-D-ribos-5-yl)-L-homocysteine + adenine. The catalysed reaction is S-methyl-5'-thioadenosine + H2O = 5-(methylsulfanyl)-D-ribose + adenine. The enzyme catalyses 5'-deoxyadenosine + H2O = 5-deoxy-D-ribose + adenine. Its pathway is amino-acid biosynthesis; L-methionine biosynthesis via salvage pathway; S-methyl-5-thio-alpha-D-ribose 1-phosphate from S-methyl-5'-thioadenosine (hydrolase route): step 1/2. In terms of biological role, catalyzes the irreversible cleavage of the glycosidic bond in both 5'-methylthioadenosine (MTA) and S-adenosylhomocysteine (SAH/AdoHcy) to adenine and the corresponding thioribose, 5'-methylthioribose and S-ribosylhomocysteine, respectively. Also cleaves 5'-deoxyadenosine, a toxic by-product of radical S-adenosylmethionine (SAM) enzymes, into 5-deoxyribose and adenine. The chain is 5'-methylthioadenosine/S-adenosylhomocysteine nucleosidase from Vibrio vulnificus (strain YJ016).